A 313-amino-acid chain; its full sequence is DDRGK domain-containing protein 1 (313 aa).

The helical transmembrane segment at 1-28 (MVSPVVYLVVAALLVGLILFLTRGRGRA) threads the bilayer. The mediates interaction with CDK5RAP3 stretch occupies residues 1–113 (MVSPVVYLVV…IEKPVETHLS (113 aa)). Topologically, residues 29 to 313 (AAAAQEPLHN…GRETPAQAPA (285 aa)) are cytoplasmic. The disordered stretch occupies residues 40 to 88 (EVPAAAGRVARPQPLEPEEQRAAGRPRRRRDLGSRLQAQRRAQRVAWAD). A phosphoserine mark is found at Ser73 and Ser113. The segment covering 73–87 (SRLQAQRRAQRVAWA) has biased composition (low complexity). Positions 117-215 (GAKKLRKLEE…MTEEQSHSFL (99 aa)) are mediates interaction with TRIP4. A disordered region spans residues 130–185 (RKAQREAEEAEREERKRLESQREAEWKKEEERLRLEEEQKEEEERKAQEEQAQREH). A UFM1-interacting motif (UFIM) motif is present at residues 194–208 (TFVVVEEGVGETMTE). The mediates interaction with UFL1 stretch occupies residues 215–313 (LAEFINYIKQ…GRETPAQAPA (99 aa)). Residues 228–272 (VLLEDLASQVGLRTQDTINRIQDLLAEGTLTGVIDDRGKFIYITP) enclose the PCI domain. A Glycyl lysine isopeptide (Lys-Gly) (interchain with G-Cter in UFM1) cross-link involves residue Lys266.

The protein belongs to the DDRGK1 family. Component of the UFM1 ribosome E3 ligase (UREL) complex, composed of UFL1, DDRGK1 and CDK5RAP3. Interacts with (unphosphorylated) ERN1/IRE1-alpha; interaction is dependent on UFM1 and takes place in response to endoplasmic reticulum stress, regulating ERN1/IRE1-alpha stability. Interacts with NFKBIA. Interacts with SOX9. In terms of processing, ubiquitinated. Ubiquitination probably triggers proteasomal degradation and is negatively regulated by UFL1, the enzyme involved in the ufmylation of DDRGK1. Post-translationally, ufmylated; conjugated to ubiquitin-like protein UFM1, probably at Lys-266 by UFL1. The relevance of ufmylation is however unclear: as DDRGK1 acts as a substrate adapter for ufmylation, it is uncertain whether ufmylation is a collateral effect of the ufmylation process or whether it is required to regulate its activity.

Its subcellular location is the endoplasmic reticulum membrane. Component of the UFM1 ribosome E3 ligase (UREL) complex, a multiprotein complex that catalyzes ufmylation of endoplasmic reticulum-docked proteins. The UREL complex plays a key role in ribosome recycling by mediating mono-ufmylation of the RPL26/uL24 subunit of the 60S ribosome following ribosome dissociation: ufmylation weakens the junction between post-termination 60S subunits and SEC61 translocons, promoting release and recycling of the large ribosomal subunit from the endoplasmic reticulum membrane. Ufmylation of RPL26/uL24 and subsequent 60S ribosome recycling either take place after normal termination of translation or after ribosome stalling during cotranslational translocation at the endoplasmic reticulum. Within the UREL complex, DDRGK1 tethers the complex to the endoplasmic reticulum membrane to restrict its activity to endoplasmic reticulum-docked ribosomes and acts as an ufmylation 'reader': following RPL26/uL24 ufmylation, DDRGK1 specifically binds to ufmylated RPL26/uL24 via its UFIM motif, resulting in stable association between the 60S ribosome and the UREL complex, followed by dissociation of the 60S ribosome subunit from the endoplasmic reticulum membrane. The UREL complex is also involved in reticulophagy in response to endoplasmic reticulum stress by promoting ufmylation of proteins such as CYB5R3 and RPN1, thereby promoting lysosomal degradation of ufmylated proteins. Ufmylation-dependent reticulophagy inhibits the unfolded protein response (UPR) by regulating ERN1/IRE1-alpha stability. Acts as a regulator of immunity by promoting differentiation of B-cells into plasma cells: acts by promoting expansion of the endoplasmic reticulum and regulating the unfolded protein response (UPR). May also be required for TRIP4 ufmylation. May play a role in NF-kappa-B-mediated transcription through regulation of the phosphorylation and the degradation of NFKBIA, the inhibitor of NF-kappa-B. Plays a role in cartilage development through SOX9, inhibiting the ubiquitin-mediated proteasomal degradation of this transcriptional regulator. Required for stabilization and ufmylation of ATG9A. This is DDRGK domain-containing protein 1 from Bos taurus (Bovine).